A 2617-amino-acid polypeptide reads, in one-letter code: DNA-directed RNA polymerase subunit beta'' (2617 aa).

Zn(2+)-binding residues include Cys263, Cys334, Cys341, and Cys344.

This sequence belongs to the RNA polymerase beta' chain family. RpoC2 subfamily. In plastids the minimal PEP RNA polymerase catalytic core is composed of four subunits: alpha, beta, beta', and beta''. When a (nuclear-encoded) sigma factor is associated with the core the holoenzyme is formed, which can initiate transcription. Zn(2+) serves as cofactor.

The protein localises to the plastid. The protein resides in the chloroplast. It carries out the reaction RNA(n) + a ribonucleoside 5'-triphosphate = RNA(n+1) + diphosphate. DNA-dependent RNA polymerase catalyzes the transcription of DNA into RNA using the four ribonucleoside triphosphates as substrates. The protein is DNA-directed RNA polymerase subunit beta'' of Oedogonium cardiacum (Filamentous green alga).